The primary structure comprises 290 residues: Non-homologous end joining protein Ku (290 aa).

A Ku domain is found at 11 to 183 (TFGLISMPVR…EAPKITSEVK (173 aa)). The disordered stretch occupies residues 253 to 290 (MKDQKKGSRLAEVDKESTVQMTPKKPAVKERRGRKRVA). Residues 254-269 (KDQKKGSRLAEVDKES) are compositionally biased toward basic and acidic residues.

The protein belongs to the prokaryotic Ku family. As to quaternary structure, homodimer. Interacts with LigD.

With LigD forms a non-homologous end joining (NHEJ) DNA repair enzyme, which repairs dsDNA breaks with reduced fidelity. Binds linear dsDNA with 5'- and 3'- overhangs but not closed circular dsDNA nor ssDNA. Recruits and stimulates the ligase activity of LigD. This is Non-homologous end joining protein Ku from Koribacter versatilis (strain Ellin345).